We begin with the raw amino-acid sequence, 566 residues long: Sorting nexin lst-4 (566 aa).

Residues 1 to 61 enclose the SH3 domain; the sequence is MAQVKAEYDF…PESYVTPYQA (61 aa). The disordered stretch occupies residues 59–179; sequence YQASRPPPVL…DRGSNKVNKN (121 aa). Over residues 63-77 the composition is skewed to pro residues; the sequence is RPPPVLPPPLPPTSS. Residues 127 to 140 are compositionally biased toward acidic residues; it reads DDFDDEWTDEDDEQ. Polar residues predominate over residues 143-154; sequence TRPNVQSSIGSN. Residues 155–173 are compositionally biased toward basic and acidic residues; it reads SRRDLSRSHSEHGGPDRGS. The PX domain maps to 227–339; it reads YTCIVDKPKK…HFISCTDEKD (113 aa). The region spanning 362 to 566 is the BAR domain; sequence TVPHQPLDPN…KLTSLAARYD (205 aa).

The protein belongs to the sorting nexin family. In terms of assembly, homodimer. Isoform d interacts (via SH3 domain) with dyn-1. Expressed in vulval precursor cells (VPCs) and apoptotic germ cells. Colocalizes with actin, dyn-1 and rab-5 in early phagosomes.

It is found in the cytoplasm. It localises to the cytoplasmic vesicle. The protein localises to the phagosome membrane. Involved in the signaling of vulval development by acting as a negative regulator of epidermal growth factor receptor (EGFR) signaling. Aids in phagosomal membrane tubule formation which is required for phagosomal fusion with endosomes and lysosomes. Also recruits rab-7 to phagosomes by an interaction with dyn-1. These are events leading to phagosome maturation which is a step in apoptotic cell corpse clearance. Binds phosphatidylinositol-3,4,5-trisphosphate. This chain is Sorting nexin lst-4, found in Caenorhabditis elegans.